The sequence spans 475 residues: 3-isopropylmalate dehydratase large subunit (475 aa).

Cys-352, Cys-413, and Cys-416 together coordinate [4Fe-4S] cluster.

It belongs to the aconitase/IPM isomerase family. LeuC type 1 subfamily. As to quaternary structure, heterodimer of LeuC and LeuD. The cofactor is [4Fe-4S] cluster.

It catalyses the reaction (2R,3S)-3-isopropylmalate = (2S)-2-isopropylmalate. Its pathway is amino-acid biosynthesis; L-leucine biosynthesis; L-leucine from 3-methyl-2-oxobutanoate: step 2/4. Its function is as follows. Catalyzes the isomerization between 2-isopropylmalate and 3-isopropylmalate, via the formation of 2-isopropylmaleate. This Pseudomonas syringae pv. tomato (strain ATCC BAA-871 / DC3000) protein is 3-isopropylmalate dehydratase large subunit.